We begin with the raw amino-acid sequence, 536 residues long: Glucan 1,6-alpha-glucosidase (536 aa).

D194 acts as the Nucleophile in catalysis. The Proton donor role is filled by E236.

This sequence belongs to the glycosyl hydrolase 13 family.

It localises to the cytoplasm. It carries out the reaction Hydrolysis of (1-&gt;6)-alpha-D-glucosidic linkages in (1-&gt;6)-alpha-D-glucans and derived oligosaccharides.. Functionally, the physiological substrates may be short isomaltosaccharides. The polypeptide is Glucan 1,6-alpha-glucosidase (dexB) (Streptococcus mutans serotype c (strain ATCC 700610 / UA159)).